A 436-amino-acid chain; its full sequence is Xylose isomerase (436 aa).

Catalysis depends on residues histidine 100 and aspartate 103. Positions 231, 267, 270, 295, 306, 308, and 338 each coordinate Mg(2+).

The protein belongs to the xylose isomerase family. As to quaternary structure, homotetramer. It depends on Mg(2+) as a cofactor.

The protein localises to the cytoplasm. The catalysed reaction is alpha-D-xylose = alpha-D-xylulofuranose. The protein is Xylose isomerase of Rhizobium etli (strain ATCC 51251 / DSM 11541 / JCM 21823 / NBRC 15573 / CFN 42).